A 431-amino-acid chain; its full sequence is Histidinol dehydrogenase (431 aa).

Tyr-130, Gln-191, and Asn-214 together coordinate NAD(+). Ser-237, Gln-259, and His-262 together coordinate substrate. Residues Gln-259 and His-262 each contribute to the Zn(2+) site. Residues Glu-327 and His-328 each act as proton acceptor in the active site. Positions 328, 361, 415, and 420 each coordinate substrate. Asp-361 contacts Zn(2+). His-420 provides a ligand contact to Zn(2+).

The protein belongs to the histidinol dehydrogenase family. Zn(2+) is required as a cofactor.

The enzyme catalyses L-histidinol + 2 NAD(+) + H2O = L-histidine + 2 NADH + 3 H(+). Its pathway is amino-acid biosynthesis; L-histidine biosynthesis; L-histidine from 5-phospho-alpha-D-ribose 1-diphosphate: step 9/9. Its function is as follows. Catalyzes the sequential NAD-dependent oxidations of L-histidinol to L-histidinaldehyde and then to L-histidine. The chain is Histidinol dehydrogenase from Syntrophotalea carbinolica (strain DSM 2380 / NBRC 103641 / GraBd1) (Pelobacter carbinolicus).